The sequence spans 213 residues: Orotate phosphoribosyltransferase (213 aa).

Lys-26 contributes to the 5-phospho-alpha-D-ribose 1-diphosphate binding site. 34 to 35 (FF) is an orotate binding site. 5-phospho-alpha-D-ribose 1-diphosphate-binding positions include 72–73 (YK), Arg-99, Lys-100, Lys-103, His-105, and 124–132 (DDVITAGTA). Thr-128 and Arg-156 together coordinate orotate.

Belongs to the purine/pyrimidine phosphoribosyltransferase family. PyrE subfamily. In terms of assembly, homodimer. Requires Mg(2+) as cofactor.

The enzyme catalyses orotidine 5'-phosphate + diphosphate = orotate + 5-phospho-alpha-D-ribose 1-diphosphate. It functions in the pathway pyrimidine metabolism; UMP biosynthesis via de novo pathway; UMP from orotate: step 1/2. Functionally, catalyzes the transfer of a ribosyl phosphate group from 5-phosphoribose 1-diphosphate to orotate, leading to the formation of orotidine monophosphate (OMP). The chain is Orotate phosphoribosyltransferase from Actinobacillus pleuropneumoniae serotype 5b (strain L20).